Here is an 869-residue protein sequence, read N- to C-terminus: Serendipity locus protein H-1 (869 aa).

The span at 1–17 (MEGGKGEGKRMKEEAPS) shows a compositional bias: basic and acidic residues. 2 disordered regions span residues 1–32 (MEGG…AGTP) and 134–165 (FSVT…TPVK). Over residues 146 to 164 (AFTNSPFKKTSSSGTSTPV) the composition is skewed to polar residues. 8 C2H2-type zinc fingers span residues 269 to 293 (HKCL…AAAH), 299 to 321 (YRCS…LKTH), 331 to 352 (KKCP…RKIH), 358 to 380 (YQCD…ARIH), 386 to 408 (YECP…QKYH), 414 to 436 (YRCE…NLVH), 442 to 464 (FACT…SNIH), and 470 to 493 (FKCN…RRRH). 2 disordered regions span residues 554–573 (TSTA…QPQQ) and 617–652 (PKQT…SSLE). Positions 630-648 (APKQLQQKPQLLQQGQPQQ) are enriched in low complexity.

As to expression, distribution varies between nurse cells and the oocyte during oogenesis. Weakly expressed in follicle and border cells.

Its subcellular location is the nucleus. Functionally, may belong to a complex set of multifingered proteins which play an important role in gene activation or regulation at early embryonic stages through a maximal accumulation of their transcripts (or protein product) in the mature oocyte. This is Serendipity locus protein H-1 (wdn) from Drosophila melanogaster (Fruit fly).